The following is a 358-amino-acid chain: GDSL esterase/lipase EXL5 (358 aa).

Residues 1-21 form the signal peptide; that stretch reads MFRKKMLVLALFSIYFLSIEA. Asn24 carries N-linked (GlcNAc...) asparagine glycosylation. Catalysis depends on Ser36, which acts as the Nucleophile. Residues Asp333 and His336 contribute to the active site.

Belongs to the 'GDSL' lipolytic enzyme family. In terms of tissue distribution, flower buds.

It is found in the secreted. This Arabidopsis thaliana (Mouse-ear cress) protein is GDSL esterase/lipase EXL5 (EXL5).